A 1091-amino-acid polypeptide reads, in one-letter code: Self-sufficient cytochrome P450 monooxygenase CYP505E1 (1091 aa).

Heme is bound at residue cysteine 433. The Flavodoxin-like domain occupies 528-669 (ICFFYGSNSG…DLEAWEETSL (142 aa)). Residues 534–538 (SNSGT) and 613–645 (VFGC…TRLA) contribute to the FMN site. Residues 707 to 935 (KDLMEARVTT…RPAKEAFHLP (229 aa)) form the FAD-binding FR-type domain.

This sequence in the N-terminal section; belongs to the cytochrome P450 family. The cofactor is FAD. FMN is required as a cofactor. Requires heme as cofactor.

The enzyme catalyses 2 oxidized [cytochrome P450] + NADPH = 2 reduced [cytochrome P450] + NADP(+) + H(+). The catalysed reaction is an organic molecule + reduced [NADPH--hemoprotein reductase] + O2 = an alcohol + oxidized [NADPH--hemoprotein reductase] + H2O + H(+). It carries out the reaction dodecanoate + reduced [NADPH--hemoprotein reductase] + O2 = 5-hydroxydodecanoate + oxidized [NADPH--hemoprotein reductase] + H2O + H(+). It catalyses the reaction tetradecanoate + reduced [NADPH--hemoprotein reductase] + O2 = 7-hydroxytetradecanoate + oxidized [NADPH--hemoprotein reductase] + H2O + H(+). The enzyme catalyses dodecan-1-ol + reduced [NADPH--hemoprotein reductase] + O2 = 1,5-dodecanediol + oxidized [NADPH--hemoprotein reductase] + H2O + H(+). The catalysed reaction is dodecan-1-ol + reduced [NADPH--hemoprotein reductase] + O2 = 1,4-dodecanediol + oxidized [NADPH--hemoprotein reductase] + H2O + H(+). It carries out the reaction dodecan-1-ol + reduced [NADPH--hemoprotein reductase] + O2 = 1,6-dodecanediol + oxidized [NADPH--hemoprotein reductase] + H2O + H(+). Self-sufficient cytochrome P450 monooxygenase that catalyzes the regioselective in-chain hydroxylation of alkanes, fatty alcohols, and fatty acids at the omega-7 position. Performs hydroxylation of C10-C16 n-alkanes and C12 and C14 fatty alcohols; and thereby enables the one step biocatalytic synthesis of rare alcohols such as 5-dodecanol and 7-tetradecanol. Converts 1-dodecanol into 1,5-dodecanediol as major product with very little sub-terminally hydroxylated products with the 1,4-dodecanediol and 1,6-dodecanediol more abundant. Converts dodecanoic acid to 5-hydroxydodecanoic acid which can be further converted into delta-dodecalactone by lactonization of the 5-hydroxy acid at low pH. Also gives sub-terminal hydroxylation of dodecanoic acid with 9-hydroxydodecanoic acid being the second most abundant product. The chain is Self-sufficient cytochrome P450 monooxygenase CYP505E1 from Aspergillus niger (strain ATCC MYA-4892 / CBS 513.88 / FGSC A1513).